A 115-amino-acid polypeptide reads, in one-letter code: Large ribosomal subunit protein bL20c (115 aa).

Belongs to the bacterial ribosomal protein bL20 family.

The protein resides in the plastid. It localises to the chloroplast. Its function is as follows. Binds directly to 23S ribosomal RNA and is necessary for the in vitro assembly process of the 50S ribosomal subunit. It is not involved in the protein synthesizing functions of that subunit. The sequence is that of Large ribosomal subunit protein bL20c (rpl20) from Cyanidium caldarium (Red alga).